A 224-amino-acid chain; its full sequence is Cysteine S-methyltransferase NleE (224 aa).

The interval 49–52 (GITR) is interaction with host proteins TAB2, TAB3 and ZRANB3. Positions 92, 98, 107, 111, 204, and 208 each coordinate S-adenosyl-L-methionine.

Belongs to the NleE/OspZ family. In terms of assembly, monomer.

It is found in the secreted. The protein localises to the host nucleus. It carries out the reaction L-cysteinyl-[protein] + S-adenosyl-L-methionine = S-methyl-L-cysteinyl-[protein] + S-adenosyl-L-homocysteine + H(+). Its function is as follows. Cysteine methyltransferase effector that inhibits host cell NF-kappa-B activation by preventing nuclear translocation of host protein RELA/p65. Acts by mediating cysteine methylation of host proteins TAB2 and TAB3: methylation of a conserved cysteine residue of the RanBP2-type zinc finger (NZF) of TAB2 and TAB3 disrupts zinc-binding, thereby inactivating the ubiquitin chain-binding activity of TAB2 and TAB3, leading to NF-kappa-B inactivation. Also mediates cysteine methylation of host protein ZRANB3, inactivating its ability to bind ubiquitin chains. The chain is Cysteine S-methyltransferase NleE from Escherichia coli O127:H6 (strain E2348/69 / EPEC).